Reading from the N-terminus, the 145-residue chain is D-aminoacyl-tRNA deacylase (145 aa).

Residues Gly-137 to Pro-138 carry the Gly-cisPro motif, important for rejection of L-amino acids motif.

The protein belongs to the DTD family. In terms of assembly, homodimer.

Its subcellular location is the cytoplasm. It catalyses the reaction glycyl-tRNA(Ala) + H2O = tRNA(Ala) + glycine + H(+). It carries out the reaction a D-aminoacyl-tRNA + H2O = a tRNA + a D-alpha-amino acid + H(+). Functionally, an aminoacyl-tRNA editing enzyme that deacylates mischarged D-aminoacyl-tRNAs. Also deacylates mischarged glycyl-tRNA(Ala), protecting cells against glycine mischarging by AlaRS. Acts via tRNA-based rather than protein-based catalysis; rejects L-amino acids rather than detecting D-amino acids in the active site. By recycling D-aminoacyl-tRNA to D-amino acids and free tRNA molecules, this enzyme counteracts the toxicity associated with the formation of D-aminoacyl-tRNA entities in vivo and helps enforce protein L-homochirality. The chain is D-aminoacyl-tRNA deacylase from Salmonella arizonae (strain ATCC BAA-731 / CDC346-86 / RSK2980).